The chain runs to 131 residues: uncharacterized protein (131 aa).

Residues 26–124 form the HTH hxlR-type domain; the sequence is CSVEVAVNEI…WGKMYGSHQE (99 aa).

This is an uncharacterized protein from Methanothermobacter thermautotrophicus (strain ATCC 29096 / DSM 1053 / JCM 10044 / NBRC 100330 / Delta H) (Methanobacterium thermoautotrophicum).